A 262-amino-acid chain; its full sequence is Phosphatidylserine decarboxylase proenzyme (262 aa).

Active-site charge relay system; for autoendoproteolytic cleavage activity residues include Asp86, His142, and Ser226. Ser226 acts as the Schiff-base intermediate with substrate; via pyruvic acid; for decarboxylase activity in catalysis. The residue at position 226 (Ser226) is a Pyruvic acid (Ser); by autocatalysis.

Belongs to the phosphatidylserine decarboxylase family. PSD-B subfamily. Prokaryotic type I sub-subfamily. As to quaternary structure, heterodimer of a large membrane-associated beta subunit and a small pyruvoyl-containing alpha subunit. Pyruvate is required as a cofactor. In terms of processing, is synthesized initially as an inactive proenzyme. Formation of the active enzyme involves a self-maturation process in which the active site pyruvoyl group is generated from an internal serine residue via an autocatalytic post-translational modification. Two non-identical subunits are generated from the proenzyme in this reaction, and the pyruvate is formed at the N-terminus of the alpha chain, which is derived from the carboxyl end of the proenzyme. The autoendoproteolytic cleavage occurs by a canonical serine protease mechanism, in which the side chain hydroxyl group of the serine supplies its oxygen atom to form the C-terminus of the beta chain, while the remainder of the serine residue undergoes an oxidative deamination to produce ammonia and the pyruvoyl prosthetic group on the alpha chain. During this reaction, the Ser that is part of the protease active site of the proenzyme becomes the pyruvoyl prosthetic group, which constitutes an essential element of the active site of the mature decarboxylase.

The protein resides in the cell membrane. It catalyses the reaction a 1,2-diacyl-sn-glycero-3-phospho-L-serine + H(+) = a 1,2-diacyl-sn-glycero-3-phosphoethanolamine + CO2. It participates in phospholipid metabolism; phosphatidylethanolamine biosynthesis; phosphatidylethanolamine from CDP-diacylglycerol: step 2/2. Its function is as follows. Catalyzes the formation of phosphatidylethanolamine (PtdEtn) from phosphatidylserine (PtdSer). The polypeptide is Phosphatidylserine decarboxylase proenzyme (Bacillus thuringiensis subsp. konkukian (strain 97-27)).